The sequence spans 38 residues: Humanin-like protein (38 aa).

As to expression, in the testis, expressed in Leydig cells at 10, 20 and 60 days of age (at protein level). Also expressed in pachytene spermatocytes at day 20 and in vessels, peritubular cells and spermatids at day 60. Not detected in Sertoli cells (at protein level). In the adult ovary, expressed in stromal cells, granulosa cells, theca cells and oocytes at diestrus and proestrus (at protein level). Expressed in the anterior pituitary where it is detected in lactotropes and somatotropes with lower levels in females than males (at protein level). In the hippocampus, expressed in astrocytes but not in neurons or oligodendrocytes (at protein level). Expressed in muscle, liver and hypothalamus but not in epididymal fat (at protein level). Widely expressed with highest levels in cardiac and skeletal muscle and lowest levels in lung, testis and uterus. In the CNS, levels are relatively high in the cerebellum and cortex and low in the hippocampus. In the hippocampus, lower levels are detected in ovariectomized animals than in controls.

It localises to the mitochondrion. Its subcellular location is the secreted. The protein resides in the cytoplasm. Functionally, plays a role as a neuroprotective factor. Protects against neuronal cell death induced by amyloid-beta peptides. Also protects against excitotoxic cell death. Prevents amyloid-beta peptide-induced spatial learning and memory impairments, protects against amyloid-beta peptide-induced suppression of hippocampal long-term potentiation, and inhibits amyloid-beta peptide-induced activation of STAT3 and inhibition of CASP3. Prevents glutamate-induced dendritic atrophy in hippocampal neurons and also prevents glutamate-induced decrease in SYP puncta number and total puncta area. Protects anterior pituitary cells from TNF-induced apoptosis. Plays a role in ovarian follicle development by acting as a cryoprotective factor for granulosa cells in the antral follicle. Increases androgen production in Leydig cells and promotes Leydig cell survival by preventing apoptosis. This Rattus norvegicus (Rat) protein is Humanin-like protein.